The following is a 588-amino-acid chain: Proteasome-associated ATPase (588 aa).

Residues 1–10 (MAAHDDDMNR) show a composition bias toward basic and acidic residues. Residues 1–23 (MAAHDDDMNRGIRPGRGSEDPAG) are disordered. A coiled-coil region spans residues 47-94 (RILEERIVELQTNLAGVSAQNERLAGTLREARDQIVALKEEVDRLAQP). 276–281 (GCGKTL) lines the ATP pocket. The tract at residues 587–588 (YL) is docks into pockets in the proteasome alpha-ring.

It belongs to the AAA ATPase family. In terms of assembly, homohexamer. Assembles into a hexameric ring structure that caps the 20S proteasome core. Strongly interacts with the prokaryotic ubiquitin-like protein Pup through a hydrophobic interface; the interacting region of ARC lies in its N-terminal coiled-coil domain. There is one Pup binding site per ARC hexamer ring. Upon ATP-binding, the C-terminus of ARC interacts with the alpha-rings of the proteasome core, possibly by binding to the intersubunit pockets.

It functions in the pathway protein degradation; proteasomal Pup-dependent pathway. Functionally, ATPase which is responsible for recognizing, binding, unfolding and translocation of pupylated proteins into the bacterial 20S proteasome core particle. May be essential for opening the gate of the 20S proteasome via an interaction with its C-terminus, thereby allowing substrate entry and access to the site of proteolysis. Thus, the C-termini of the proteasomal ATPase may function like a 'key in a lock' to induce gate opening and therefore regulate proteolysis. This is Proteasome-associated ATPase from Streptomyces coelicolor (strain ATCC BAA-471 / A3(2) / M145).